A 340-amino-acid polypeptide reads, in one-letter code: Phosphoribosylformylglycinamidine cyclo-ligase (340 aa).

The protein belongs to the AIR synthase family.

Its subcellular location is the cytoplasm. It carries out the reaction 2-formamido-N(1)-(5-O-phospho-beta-D-ribosyl)acetamidine + ATP = 5-amino-1-(5-phospho-beta-D-ribosyl)imidazole + ADP + phosphate + H(+). The protein operates within purine metabolism; IMP biosynthesis via de novo pathway; 5-amino-1-(5-phospho-D-ribosyl)imidazole from N(2)-formyl-N(1)-(5-phospho-D-ribosyl)glycinamide: step 2/2. The chain is Phosphoribosylformylglycinamidine cyclo-ligase from Streptococcus uberis (strain ATCC BAA-854 / 0140J).